The primary structure comprises 466 residues: Transcription factor eupR (466 aa).

Over residues 1–18 (MFSTEPRSDTAPGSPSCS) the composition is skewed to polar residues. Residues 1 to 22 (MFSTEPRSDTAPGSPSCSETKR) form a disordered region. A DNA-binding region (zn(2)-C6 fungal-type) is located at residues 32–62 (CWECKRRKVKCSYSNPSDPRCIGCRRRGTKC).

The protein localises to the nucleus. Functionally, transcription factor; part of the gene cluster that mediates the biosynthesis of eupenifeldin, a bistropolone meroterpenoid that acts as an antitumor agent. The chain is Transcription factor eupR from Phoma sp.